Here is an 89-residue protein sequence, read N- to C-terminus: HssA/B-like protein DDB_G0295685 (89 aa).

This sequence belongs to the hssA/B family.

The sequence is that of HssA/B-like protein DDB_G0295685 from Dictyostelium discoideum (Social amoeba).